Here is a 398-residue protein sequence, read N- to C-terminus: E3 ubiquitin-protein ligase ATL6 (398 aa).

A signal peptide spans 1-29; the sequence is MRSSDHMAFAGVLPIVFLLILSSADLAAS. The helical transmembrane segment at 50–70 threads the bilayer; sequence AVIVVILIAALFFMGFFSIYF. The RING-type; atypical zinc-finger motif lies at 128 to 170; that stretch reads CAICLNEFEDDETLRLLPKCDHVFHPHCIDAWLEAHVTCPVCR. Serine 278 is modified (phosphoserine). The disordered stretch occupies residues 368–398; that stretch reads PRGGVNKDGEGTSVKSTGASGSTSGSVRLPV. Over residues 378–398 the composition is skewed to low complexity; the sequence is GTSVKSTGASGSTSGSVRLPV.

It belongs to the RING-type zinc finger family. ATL subfamily.

The protein localises to the membrane. The enzyme catalyses S-ubiquitinyl-[E2 ubiquitin-conjugating enzyme]-L-cysteine + [acceptor protein]-L-lysine = [E2 ubiquitin-conjugating enzyme]-L-cysteine + N(6)-ubiquitinyl-[acceptor protein]-L-lysine.. The protein operates within protein modification; protein ubiquitination. In terms of biological role, E3 ubiquitin-protein ligase able to catalyze polyubiquitination with ubiquitin-conjugating enzyme E2 UBC8 in vitro. May be involved in the plant C/N response and the early steps of the plant defense signaling pathway. This chain is E3 ubiquitin-protein ligase ATL6 (ATL6), found in Arabidopsis thaliana (Mouse-ear cress).